The chain runs to 284 residues: ASC1-like protein 3 (284 aa).

The next 6 membrane-spanning stretches (helical) occupy residues 9-29 (SSFF…RFFL), 69-89 (LTYY…EPWS), 108-128 (LMLF…ALVA), 148-168 (ILIG…ILAL), 195-215 (FGLF…FWII), and 243-263 (MLLT…LMIM). Residues 60–267 (VKFSESIWKL…ICLMIMKQLN (208 aa)) enclose the TLC domain.

The protein localises to the endoplasmic reticulum membrane. In terms of biological role, mediates resistance to sphinganine-analog mycotoxins (SAMs) by restoring the sphingolipid biosynthesis. Could salvage the transport of GPI-anchored proteins from the endoplasmic reticulum to the Golgi apparatus in ceramides-depleted cells after SAM exposure. This is ASC1-like protein 3 from Oryza sativa subsp. japonica (Rice).